Here is a 222-residue protein sequence, read N- to C-terminus: Guanylate kinase (222 aa).

Positions 19–197 (GFLFILSSPS…SVSLIKSIYL (179 aa)) constitute a Guanylate kinase-like domain. Residue 26–33 (SPSGAGKS) participates in ATP binding.

Belongs to the guanylate kinase family.

Its subcellular location is the cytoplasm. It catalyses the reaction GMP + ATP = GDP + ADP. Functionally, essential for recycling GMP and indirectly, cGMP. This Bartonella henselae (strain ATCC 49882 / DSM 28221 / CCUG 30454 / Houston 1) (Rochalimaea henselae) protein is Guanylate kinase.